A 412-amino-acid chain; its full sequence is Tyrosine--tRNA ligase (412 aa).

Residue Tyr31 coordinates L-tyrosine. The 'HIGH' region signature appears at 36-45; the sequence is PTAASLHIGH. Positions 162 and 166 each coordinate L-tyrosine. Positions 222-226 match the 'KMSKS' region motif; sequence KIGKT. Lys225 contacts ATP. In terms of domain architecture, S4 RNA-binding spans 345–412; the sequence is KRWIDLFVGV…KKKKLVLHLI (68 aa).

The protein belongs to the class-I aminoacyl-tRNA synthetase family. TyrS type 1 subfamily. In terms of assembly, homodimer.

Its subcellular location is the cytoplasm. The catalysed reaction is tRNA(Tyr) + L-tyrosine + ATP = L-tyrosyl-tRNA(Tyr) + AMP + diphosphate + H(+). Functionally, catalyzes the attachment of tyrosine to tRNA(Tyr) in a two-step reaction: tyrosine is first activated by ATP to form Tyr-AMP and then transferred to the acceptor end of tRNA(Tyr). This is Tyrosine--tRNA ligase from Chlamydia caviae (strain ATCC VR-813 / DSM 19441 / 03DC25 / GPIC) (Chlamydophila caviae).